A 492-amino-acid polypeptide reads, in one-letter code: WD repeat-containing protein JIP5 (492 aa).

WD repeat units lie at residues 127–166 (RHKGSVRAMCFDSKGDNIFSVGSDNVLKKANTMTGKVVKK), 178–217 (KKNDKFTKLCASQTHPFILIGDESGNIHVINSENLALSNS), 236–274 (RSAYKFISLGQTTLAYFDVRDKDAKPNVAGNEDGKILIS), 276–317 (DQED…LEDQ), and 365–405 (RNHS…VEEN). Acidic residues-rich tracts occupy residues 404–414 (ENASVESDSDE) and 422–433 (DLSDDTSSDDET). Residues 404–472 (ENASVESDSD…SKSVKKRKIM (69 aa)) are disordered. The segment covering 449–462 (KDLKEDHQEEKESN) has biased composition (basic and acidic residues).

Interacts with BUD27 and GIS1.

The protein localises to the nucleus. It localises to the nucleolus. The sequence is that of WD repeat-containing protein JIP5 (JIP5) from Saccharomyces cerevisiae (strain ATCC 204508 / S288c) (Baker's yeast).